The chain runs to 650 residues: MICOS complex subunit MIC60, mitochondrial (650 aa).

The N-terminal 34 residues, 1–34 (MLRKSVLELSSRLSIKRFPRNLGAQRFHLSSSRN), are a transit peptide targeting the mitochondrion. The interval 26-74 (RFHLSSSRNASTSGKNGLPGAKPVGKPDASKVDPPKVTPPPPTKGNSSK) is disordered. Polar residues predominate over residues 28-40 (HLSSSRNASTSGK). Residues 35 to 74 (ASTSGKNGLPGAKPVGKPDASKVDPPKVTPPPPTKGNSSK) lie on the Mitochondrial matrix side of the membrane. Residues 75–95 (VVIGGVAIAGAFLVAYQTGYL) form a helical membrane-spanning segment. At 96 to 549 (DQYLGKEQQK…FDTLKGTLRH (454 aa)) the chain is on the mitochondrial intermembrane side. Disordered stretches follow at residues 121–168 (EAHH…ESDL), 239–267 (QSSSVHRESETESASPKDPAALKTPEDGI), and 284–304 (EGSDTESTGSSSIGEQITKET). Residues 284-299 (EGSDTESTGSSSIGEQ) are compositionally biased toward low complexity. Coiled-coil stretches lie at residues 345–369 (AQVFAEELRALKEKYENELRDLRAR) and 396–430 (KAIQERMEDKLKAELEQKETEAQLALSKAEELAKA). A helical transmembrane segment spans residues 550–570 (FSLIPPGGGGILAHSLAHVAS). At 571 to 650 (SLKFKEVDQA…QSYATCVSLT (80 aa)) the chain is on the mitochondrial matrix side.

Belongs to the MICOS complex subunit Mic60 family. Component of the mitochondrial contact site and cristae organizing system (MICOS) complex. The MICOS complex associates with mitochondrial outer membrane proteins. Present in a large lipid-enriched complex called mitochondrial transmembrane lipoprotein (MTL) complex made of proteins located in the two mitochondrial membranes, including the TOM complex and the core components of the MICOS complex and containing at least digalactosyldiacylglycerol (DGDG). Binds to TOM40-1. Component of a mitochondrial large protein complex that contains, at least, MIC60, DGS1, TOM40, TOM20 proteins, and petC/RISP.

Its subcellular location is the mitochondrion inner membrane. Component of the MICOS complex, a large protein complex of the mitochondrial inner membrane that plays crucial roles in the maintenance of crista junctions, inner membrane architecture, and formation of contact sites to the outer membrane. Plays a role in keeping cristae membranes connected to the inner boundary membrane. Also promotes protein import via the mitochondrial intermembrane space assembly (MIA) pathway. Involved in the maintenance of mitochondria morphology. Binds to glycerolipids such as cardiolipin (CL). Contributes to the export of phosphatidylethanolamine (PE) from mitochondria and to the import of galactoglycerolipids from plastids during phosphate (Pi) starvation. Promotes lipid desorption from membranes, likely as an initial step for lipid transfer, and regulates probably the tethering between the inner and outer membranes of mitochondria by binding to TOM40 proteins. This chain is MICOS complex subunit MIC60, mitochondrial, found in Arabidopsis thaliana (Mouse-ear cress).